The chain runs to 428 residues: Sialidase-3 (428 aa).

The FRIP motif motif lies at 24–27; that stretch reads YRIP. Arg25 and Arg45 together coordinate substrate. The active-site Proton acceptor is the Asp50. The stretch at 129-140 is one BNR 1 repeat; sequence ICSQDAGYSWSD. 2 residues coordinate substrate: Tyr179 and Tyr181. The BNR 2 repeat unit spans residues 203–214; that stretch reads IYSDDLGATWHH. Substrate is bound by residues Glu225 and Arg245. One copy of the BNR 3 repeat lies at 254–265; the sequence is ALSIDHGECFQK. Residue Ser314 is modified to Phosphoserine. Arg341 is a binding site for substrate. The active-site Nucleophile is the Tyr371. The active site involves Glu388.

It belongs to the glycosyl hydrolase 33 family. As to quaternary structure, interacts with CAV1; this interaction enhances NEU3 sialidase activity within caveola. Interacts with EGFR; this interaction mediates desialylation of EGFR and enhances downstream signaling. In terms of processing, palmitoylated; may regulate intracellular trafficking and anchorage to plasma membrane and endomembranes. In terms of tissue distribution, expressed in brain.

It is found in the cell membrane. Its subcellular location is the membrane. The protein resides in the caveola. It localises to the early endosome membrane. The protein localises to the recycling endosome membrane. It is found in the lysosome membrane. It carries out the reaction Hydrolysis of alpha-(2-&gt;3)-, alpha-(2-&gt;6)-, alpha-(2-&gt;8)- glycosidic linkages of terminal sialic acid residues in oligosaccharides, glycoproteins, glycolipids, colominic acid and synthetic substrates.. The catalysed reaction is a ganglioside GD1a + H2O = a ganglioside GM1 + N-acetylneuraminate. It catalyses the reaction a ganglioside GD1a (d18:1(4E)) + H2O = a ganglioside GM1 (d18:1(4E)) + N-acetylneuraminate. The enzyme catalyses a ganglioside GD1b + H2O = a ganglioside GM1 + N-acetylneuraminate. It carries out the reaction a ganglioside GD1b (d18:1(4E)) + H2O = a ganglioside GM1 (d18:1(4E)) + N-acetylneuraminate. The catalysed reaction is a ganglioside GD3 + H2O = a ganglioside GM3 + N-acetylneuraminate. It catalyses the reaction a ganglioside GD3 (d18:1(4E)) + H2O = a ganglioside GM3 (d18:1(4E)) + N-acetylneuraminate. The enzyme catalyses a ganglioside GM3 + H2O = a beta-D-galactosyl-(1-&gt;4)-beta-D-glucosyl-(1&lt;-&gt;1)-ceramide + N-acetylneuraminate. It carries out the reaction a ganglioside GM1 + H2O = a ganglioside GA1 + N-acetylneuraminate. The catalysed reaction is a ganglioside GM1 (d18:1(4E)) + H2O = a ganglioside GA1 (d18:1(4E)) + N-acetylneuraminate. It catalyses the reaction a ganglioside GM2 (d18:1(4E)) + H2O = a ganglioside GA2 (d18:1(4E)) + N-acetylneuraminate. The enzyme catalyses a ganglioside GM3 (d18:1(4E)) + H2O = a beta-D-Gal-(1-&gt;4)-beta-D-Glc-(1&lt;-&gt;1)-Cer(d18:1(4E)) + N-acetylneuraminate. It carries out the reaction a ganglioside GT1b + H2O = a ganglioside GD1b + N-acetylneuraminate. Its function is as follows. Exo-alpha-sialidase that catalyzes the hydrolytic cleavage of the terminal sialic acid (N-acetylneuraminic acid, Neu5Ac) of a glycan moiety in the catabolism of glycolipids, glycoproteins and oligosacharides. Displays high catalytic efficiency for gangliosides including alpha-(2-&gt;3)-sialylated GD1a and GM3 and alpha-(2-&gt;8)-sialylated GD3. Plays a role in the regulation of transmembrane signaling through the modulation of ganglioside content of the lipid bilayer and by direct interaction with signaling receptors, such as EGFR. Desialylates EGFR and activates downstream signaling in proliferating cells. Contributes to clathrin-mediated endocytosis by regulating sorting of endocytosed receptors to early and recycling endosomes. This is Sialidase-3 (NEU3) from Bos taurus (Bovine).